Consider the following 335-residue polypeptide: UPF0353 protein MMAR_2288 (335 aa).

2 helical membrane-spanning segments follow: residues 18-38 (WFFLFIFVIAGLIAVYVVLQL) and 67-87 (IPAMLLALSLVLFTVAMAGPT). The VWFA domain maps to 98–294 (VVMLVIDVSQ…AELNSVYASL (197 aa)). Residues 309-329 (MGWLRLGALVLVAAALAALLI) traverse the membrane as a helical segment.

The protein belongs to the UPF0353 family.

The protein resides in the cell membrane. The polypeptide is UPF0353 protein MMAR_2288 (Mycobacterium marinum (strain ATCC BAA-535 / M)).